The sequence spans 243 residues: Large ribosomal subunit protein uL30 (243 aa).

The interval 1–31 (MADKILTPESQLKKSKAQQKSAEQVAAERAA) is disordered. Positions 18-28 (QQKSAEQVAAE) are enriched in low complexity.

The protein belongs to the universal ribosomal protein uL30 family.

This is Large ribosomal subunit protein uL30 (RPL7) from Eremothecium gossypii (strain ATCC 10895 / CBS 109.51 / FGSC 9923 / NRRL Y-1056) (Yeast).